Consider the following 273-residue polypeptide: MSQHPDINTNVDATSLTDDQKSLDTNATSGNEVAPDGNKHIRIVNTFMKRRTHMNKNAELALTAPEFAHYLVNNSFGDGNLEGIDDLRALFAELPNGSEAPLTLEIGFGLGDSFIEMAAAEPSRNFVGIEVHEPGIGKCAYMAGTQNLSNVRIINGDAIQLLKQLPENHIDRIQLYFPDPWQKKRHHKRRFVSPERMAIVTRSLKQGGWFHTATDWEHYAFWMVEVLDGFVGLSNQAGAGNFTSRPDFRPMTKFERRGLASGHGVWDLIYLKD.

Polar residues predominate over residues 1-31 (MSQHPDINTNVDATSLTDDQKSLDTNATSGN). Positions 1–36 (MSQHPDINTNVDATSLTDDQKSLDTNATSGNEVAPD) are disordered. S-adenosyl-L-methionine-binding residues include Glu-105, Glu-130, Asp-157, and Asp-179. Asp-179 is an active-site residue. Residues Lys-183, Asp-215, and 252–255 (TKFE) each bind substrate.

It belongs to the class I-like SAM-binding methyltransferase superfamily. TrmB family.

The enzyme catalyses guanosine(46) in tRNA + S-adenosyl-L-methionine = N(7)-methylguanosine(46) in tRNA + S-adenosyl-L-homocysteine. The protein operates within tRNA modification; N(7)-methylguanine-tRNA biosynthesis. Functionally, catalyzes the formation of N(7)-methylguanine at position 46 (m7G46) in tRNA. The polypeptide is tRNA (guanine-N(7)-)-methyltransferase (Psychrobacter cryohalolentis (strain ATCC BAA-1226 / DSM 17306 / VKM B-2378 / K5)).